We begin with the raw amino-acid sequence, 868 residues long: Translation initiation factor IF-2 (868 aa).

Disordered stretches follow at residues 158 to 178 (VKEE…DELT) and 200 to 269 (KKEE…KYRE). Over residues 200–209 (KKEEVKPEKV) the composition is skewed to basic and acidic residues. The segment covering 249 to 260 (RGGRSKFKKKKG) has biased composition (basic residues). One can recognise a tr-type G domain in the interval 368–537 (GRAPVVTIMG…LLQSEVLELK (170 aa)). Positions 377–384 (GHVDHGKT) are G1. 377–384 (GHVDHGKT) lines the GTP pocket. The G2 stretch occupies residues 402-406 (GITQH). Residues 423 to 426 (DTPG) are G3. GTP-binding positions include 423 to 427 (DTPGH) and 477 to 480 (NKMD). The G4 stretch occupies residues 477-480 (NKMD). Residues 513 to 515 (SAK) are G5.

It belongs to the TRAFAC class translation factor GTPase superfamily. Classic translation factor GTPase family. IF-2 subfamily.

It is found in the cytoplasm. In terms of biological role, one of the essential components for the initiation of protein synthesis. Protects formylmethionyl-tRNA from spontaneous hydrolysis and promotes its binding to the 30S ribosomal subunits. Also involved in the hydrolysis of GTP during the formation of the 70S ribosomal complex. In Legionella pneumophila (strain Lens), this protein is Translation initiation factor IF-2.